Here is a 390-residue protein sequence, read N- to C-terminus: tRNA(Met) cytidine acetate ligase (390 aa).

ATP is bound by residues 7–20 (VVEY…HKLH), Gly101, Asn162, and Arg187.

Belongs to the TmcAL family.

The protein resides in the cytoplasm. The enzyme catalyses cytidine(34) in elongator tRNA(Met) + acetate + ATP = N(4)-acetylcytidine(34) in elongator tRNA(Met) + AMP + diphosphate. Functionally, catalyzes the formation of N(4)-acetylcytidine (ac(4)C) at the wobble position of elongator tRNA(Met), using acetate and ATP as substrates. First activates an acetate ion to form acetyladenylate (Ac-AMP) and then transfers the acetyl group to tRNA to form ac(4)C34. The chain is tRNA(Met) cytidine acetate ligase from Listeria monocytogenes serotype 4a (strain HCC23).